The sequence spans 223 residues: Triosephosphate isomerase (223 aa).

Residue 10 to 12 (NFK) coordinates substrate. The Electrophile role is filled by histidine 94. The active-site Proton acceptor is glutamate 142. Substrate contacts are provided by residues isoleucine 147, glycine 182, and 203–204 (AS).

The protein belongs to the triosephosphate isomerase family. In terms of assembly, homotetramer; dimer of dimers.

It is found in the cytoplasm. The enzyme catalyses D-glyceraldehyde 3-phosphate = dihydroxyacetone phosphate. It functions in the pathway carbohydrate biosynthesis; gluconeogenesis. It participates in carbohydrate degradation; glycolysis; D-glyceraldehyde 3-phosphate from glycerone phosphate: step 1/1. Functionally, involved in the gluconeogenesis. Catalyzes stereospecifically the conversion of dihydroxyacetone phosphate (DHAP) to D-glyceraldehyde-3-phosphate (G3P). This is Triosephosphate isomerase from Archaeoglobus fulgidus (strain ATCC 49558 / DSM 4304 / JCM 9628 / NBRC 100126 / VC-16).